A 119-amino-acid polypeptide reads, in one-letter code: UPF0102 protein MS1289 (119 aa).

The protein belongs to the UPF0102 family.

The chain is UPF0102 protein MS1289 from Mannheimia succiniciproducens (strain KCTC 0769BP / MBEL55E).